A 1136-amino-acid chain; its full sequence is Mitochondrial 3' processome subunit 3 (1136 aa).

The N-terminal 97 residues, 1-97 (MKKAWAQLER…RGLVCTTVGD (97 aa)), are a transit peptide targeting the mitochondrion.

As to quaternary structure, component of the mitochondrial 3' processome (MPsome) complex composed at least of terminal uridylyltransferase KRET1/TUT1, 3'-5' exonuclease DSS1, MPSS1, MPSS2 and MPSS3. Within the complex, interacts with KRET1.

It localises to the mitochondrion. As part of the mitochondrial 3' processome (MPsome), involved in the maturation of guided RNA (gRNA) precursors. This Trypanosoma brucei brucei protein is Mitochondrial 3' processome subunit 3.